Here is a 31-residue protein sequence, read N- to C-terminus: Cyclotide mden-K (31 aa).

The cyclopeptide (Gly-Asn) cross-link spans 1–31 (GSIPCGESCVWIPCISSVVGCACKNKVCYKN). Disulfide bonds link cysteine 5/cysteine 21, cysteine 9/cysteine 23, and cysteine 14/cysteine 28.

Belongs to the cyclotide family. Bracelet subfamily. This is a cyclic peptide.

Its function is as follows. Probably participates in a plant defense mechanism. The chain is Cyclotide mden-K from Melicytus dentatus (Tree violet).